The primary structure comprises 148 residues: 3-hydroxyacyl-[acyl-carrier-protein] dehydratase FabZ (148 aa).

Residue histidine 48 is part of the active site.

It belongs to the thioester dehydratase family. FabZ subfamily.

The protein localises to the cytoplasm. The catalysed reaction is a (3R)-hydroxyacyl-[ACP] = a (2E)-enoyl-[ACP] + H2O. Its function is as follows. Involved in unsaturated fatty acids biosynthesis. Catalyzes the dehydration of short chain beta-hydroxyacyl-ACPs and long chain saturated and unsaturated beta-hydroxyacyl-ACPs. The protein is 3-hydroxyacyl-[acyl-carrier-protein] dehydratase FabZ of Campylobacter fetus subsp. fetus (strain 82-40).